The following is a 465-amino-acid chain: tRNA-2-methylthio-N(6)-dimethylallyladenosine synthase (465 aa).

An MTTase N-terminal domain is found at 18 to 136 (RKLYIETYGC…LPNLVGAAEQ (119 aa)). Residues C27, C63, C100, C174, C178, and C181 each contribute to the [4Fe-4S] cluster site. One can recognise a Radical SAM core domain in the interval 160 to 392 (GGVHINGFVS…IALQNRLSEE (233 aa)). One can recognise a TRAM domain in the interval 395-458 (KRDISKTFEV…SATLFGEVVE (64 aa)).

It belongs to the methylthiotransferase family. MiaB subfamily. Monomer. It depends on [4Fe-4S] cluster as a cofactor.

It is found in the cytoplasm. The enzyme catalyses N(6)-dimethylallyladenosine(37) in tRNA + (sulfur carrier)-SH + AH2 + 2 S-adenosyl-L-methionine = 2-methylsulfanyl-N(6)-dimethylallyladenosine(37) in tRNA + (sulfur carrier)-H + 5'-deoxyadenosine + L-methionine + A + S-adenosyl-L-homocysteine + 2 H(+). Functionally, catalyzes the methylthiolation of N6-(dimethylallyl)adenosine (i(6)A), leading to the formation of 2-methylthio-N6-(dimethylallyl)adenosine (ms(2)i(6)A) at position 37 in tRNAs that read codons beginning with uridine. This is tRNA-2-methylthio-N(6)-dimethylallyladenosine synthase from Porphyromonas gingivalis (strain ATCC 33277 / DSM 20709 / CIP 103683 / JCM 12257 / NCTC 11834 / 2561).